The following is a 25-amino-acid chain: Small ribosomal subunit protein eS32A (25 aa).

A disordered region spans residues methionine 1–lysine 25.

Belongs to the eukaryotic ribosomal protein eS32 family. Component of the large ribosomal subunit (LSU). Mature yeast ribosomes consist of a small (40S) and a large (60S) subunit. The 40S small subunit contains 1 molecule of ribosomal RNA (18S rRNA) and at least 33 different proteins. The large 60S subunit contains 3 rRNA molecules (25S, 5.8S and 5S rRNA) and at least 46 different proteins.

The protein localises to the cytoplasm. The protein resides in the nucleus. Its function is as follows. Component of the ribosome, a large ribonucleoprotein complex responsible for the synthesis of proteins in the cell. The small ribosomal subunit (SSU) binds messenger RNAs (mRNAs) and translates the encoded message by selecting cognate aminoacyl-transfer RNA (tRNA) molecules. The large subunit (LSU) contains the ribosomal catalytic site termed the peptidyl transferase center (PTC), which catalyzes the formation of peptide bonds, thereby polymerizing the amino acids delivered by tRNAs into a polypeptide chain. The nascent polypeptides leave the ribosome through a tunnel in the LSU and interact with protein factors that function in enzymatic processing, targeting, and the membrane insertion of nascent chains at the exit of the ribosomal tunnel. This chain is Small ribosomal subunit protein eS32A (rpl4101), found in Schizosaccharomyces pombe (strain 972 / ATCC 24843) (Fission yeast).